The sequence spans 789 residues: Zinc finger protein GLIS1 (789 aa).

2 stretches are compositionally biased toward basic and acidic residues: residues 1-16 and 63-74; these read MHCE…RPKE and RAHDLLRPRSPR. Disordered stretches follow at residues 1–29, 53–93, and 278–304; these read MHCE…GPVS, LLPR…YGHS, and PPLP…QEGS. Polar residues predominate over residues 80 to 92; it reads KTGSGKVNGSYGH. The C2H2-type 1 zinc finger occupies 366-391; it reads QACRWVDCCAAYEQQEELVRHIEKSH. The C2H2-type 2; atypical zinc finger occupies 400–427; it reads FTCFWAGCVRRYKPFNARYKLLIHMRVH. C2H2-type zinc fingers lie at residues 433 to 457, 463 to 487, and 493 to 517; these read NKCM…LRSH, YLCQ…QRTH, and YACQ…VKAH. 2 disordered regions span residues 506-529 and 573-684; these read DPSS…KKLH and VYPG…QGYQ. Positions 511 to 527 match the Bipartite nuclear localization signal motif; that stretch reads RKHVKAHSAKEQQVRKK. Positions 648–658 are enriched in low complexity; the sequence is ASQSQSPGGQS.

It belongs to the GLI C2H2-type zinc-finger protein family. As to quaternary structure, interacts with KLF4. Interacts with POU5F1 and/or POU5F1B. Interacts with SOX2. As to expression, in the adult, expressed highly in placenta and kidney and at lower levels in the testis, brain, colon, brown fat tissue and thymus. During embryo development, expressed in the frontal nasal region, branchial arches, somites, vibrissal and hair follicles, limb buds, craniofacial regions, ventral part of the tail, intervertebral disks, teeth, eyes and kidney.

Its subcellular location is the nucleus. Its function is as follows. Acts both as a repressor and an ctivator of transcription. Binds to the consensus sequence 5'-GACCACCCAC-3'. By controlling the expression of genes involved in cell differentiation inhibits the lineage commitment of multipotent cells. Prevents, for instance, the differentiation of multipotent mesenchymal cells into adipocyte and osteoblast. In Mus musculus (Mouse), this protein is Zinc finger protein GLIS1.